The chain runs to 249 residues: MFSNIDQTAVAALLRGQGCANSLKRLLENHKLSSDSTEPLIYTILNSFSLALSFVDPPSLLPHNESSLQNMTSHVLQRSSKKKYYGAEDLEYYRDESPTPRPDDGFTWRKYGQKTIKTSPYQRCYYRCTYAKDQNCNARKRVQMIQDNPPVYRTTYLGKHVCKAVAVHDDTYGSEMIKFDQVVSESVMPQLATIDEQAITMEDEAIDHIMNQECDINDFSVDDDPFWASQFPPFSSEDIMFFDNIANLD.

The WRKY DNA-binding region spans 97–165 (SPTPRPDDGF…YLGKHVCKAV (69 aa)).

This sequence belongs to the WRKY group III family.

It localises to the nucleus. Its function is as follows. Transcription factor. Interacts specifically with the W box (5'-(T)TGAC[CT]-3'), a frequently occurring elicitor-responsive cis-acting element. This chain is Probable WRKY transcription factor 64 (WRKY64), found in Arabidopsis thaliana (Mouse-ear cress).